The primary structure comprises 573 residues: Excitatory amino acid transporter 2 (573 aa).

Positions 1 to 11 (MASTEGANNMP) are enriched in polar residues. Residues 1–29 (MASTEGANNMPKQVEVRMHDSHLSSEEPK) form a disordered region. Topologically, residues 1 to 44 (MASTEGANNMPKQVEVRMHDSHLSSEEPKHRNLGMRMCDKLGKN) are cytoplasmic. S3, S21, S24, and S25 each carry phosphoserine. Residues 14 to 29 (VEVRMHDSHLSSEEPK) are compositionally biased toward basic and acidic residues. The S-palmitoyl cysteine moiety is linked to residue C38. 3 helical membrane-spanning segments follow: residues 45 to 64 (LLLSLTVFGVILGAVCGGLL), 88 to 108 (MLKMLILPLIISSLITGLSGL), and 121 to 142 (MVYYMSTTIIAAVLGVILVLAI). N205 and N215 each carry an N-linked (GlcNAc...) asparagine glycan. 3 consecutive transmembrane segments (helical) span residues 235–258 (FKDGMNVLGLIGFFIAFGIAMGKM), 268–295 (FFNILNEIVMKLVIMIMWYSPLGIACLI), and 317–338 (ITVIVGLIIHGGIFLPLIYFVV). The segment at residues 344-374 (FSFFAGIFQAWITALGTASSAGTLPVTFRCL) is an intramembrane region (discontinuously helical). 361-363 (ASS) is a binding site for L-aspartate. The helical transmembrane segment at 384 to 410 (VTRFVLPVGATINMDGTALYEAVAAIF) threads the bilayer. Na(+) is bound by residues G392, T394, and N396. Residues T400, 441–445 (IPSAG), D474, and N481 contribute to the L-aspartate site. The discontinuously helical intramembrane region spans 424–457 (IVTVSLTATLASIGAASIPSAGLVTMLLILTAVG). Residues 471 to 492 (WLLDRMRTSVNVVGDSFGAGIV) traverse the membrane as a helical segment. Residues N481 and D485 each coordinate Na(+). Phosphoserine is present on residues S505, S520, S531, and S533. The residue at position 538 (Y538) is a Phosphotyrosine. Residues S543, S559, and S563 each carry the phosphoserine modification.

This sequence belongs to the dicarboxylate/amino acid:cation symporter (DAACS) (TC 2.A.23) family. SLC1A2 subfamily. As to quaternary structure, homotrimer. Interacts with AJUBA. Glycosylated. In terms of processing, palmitoylation at Cys-38 is not required for correct subcellular localization, but is important for glutamate uptake activity. In terms of tissue distribution, localized in brain and is highly enriched in the Purkinje cell layer in cerebellum.

It localises to the cell membrane. The enzyme catalyses K(+)(in) + L-glutamate(out) + 3 Na(+)(out) + H(+)(out) = K(+)(out) + L-glutamate(in) + 3 Na(+)(in) + H(+)(in). It carries out the reaction D-aspartate(out) + K(+)(in) + 3 Na(+)(out) + H(+)(out) = D-aspartate(in) + K(+)(out) + 3 Na(+)(in) + H(+)(in). The catalysed reaction is K(+)(in) + L-aspartate(out) + 3 Na(+)(out) + H(+)(out) = K(+)(out) + L-aspartate(in) + 3 Na(+)(in) + H(+)(in). Sodium-dependent, high-affinity amino acid transporter that mediates the uptake of L-glutamate and also L-aspartate and D-aspartate. Functions as a symporter that transports one amino acid molecule together with two or three Na(+) ions and one proton, in parallel with the counter-transport of one K(+) ion. Mediates Cl(-) flux that is not coupled to amino acid transport; this avoids the accumulation of negative charges due to aspartate and Na(+) symport. Essential for the rapid removal of released glutamate from the synaptic cleft, and for terminating the postsynaptic action of glutamate. The polypeptide is Excitatory amino acid transporter 2 (Slc1a2) (Rattus norvegicus (Rat)).